We begin with the raw amino-acid sequence, 418 residues long: Actin-like protein 7B (418 aa).

Positions 1 to 42 (MATKNSPSPKPMGTAQGDPGEAGTLPAPEAAGIRDTGSTQLK) are disordered. S8 is subject to Phosphoserine.

This sequence belongs to the actin family. Testis specific.

The protein localises to the cytoplasm. The protein resides in the cytoskeleton. The chain is Actin-like protein 7B (Actl7b) from Mus musculus (Mouse).